Reading from the N-terminus, the 200-residue chain is GTP cyclohydrolase-2 (200 aa).

GTP is bound at residue 50-54; that stretch reads RVHSE. Zn(2+) is bound by residues Cys-55, Cys-66, and Cys-68. GTP contacts are provided by residues Gln-71, 93–95, and Thr-115; that span reads EGR. The active-site Proton acceptor is the Asp-127. The Nucleophile role is filled by Arg-129. Residues Thr-150 and Lys-155 each coordinate GTP.

It belongs to the GTP cyclohydrolase II family. It depends on Zn(2+) as a cofactor.

It carries out the reaction GTP + 4 H2O = 2,5-diamino-6-hydroxy-4-(5-phosphoribosylamino)-pyrimidine + formate + 2 phosphate + 3 H(+). It participates in cofactor biosynthesis; riboflavin biosynthesis; 5-amino-6-(D-ribitylamino)uracil from GTP: step 1/4. Its function is as follows. Catalyzes the conversion of GTP to 2,5-diamino-6-ribosylamino-4(3H)-pyrimidinone 5'-phosphate (DARP), formate and pyrophosphate. This chain is GTP cyclohydrolase-2, found in Acinetobacter baumannii (strain AB307-0294).